A 249-amino-acid polypeptide reads, in one-letter code: L-fucose operon activator (249 aa).

The 56-residue stretch at 1 to 56 (MNYRDELILQWVNQQGKASVIELAQHCDISVETIRRDLNKLANKGLLHRTHGGAVS) folds into the HTH deoR-type domain. A DNA-binding region (H-T-H motif) is located at residues 18 to 37 (ASVIELAQHCDISVETIRRD).

Its function is as follows. Transcriptional activator of the fuc operon. This is L-fucose operon activator (fucR) from Haemophilus influenzae (strain ATCC 51907 / DSM 11121 / KW20 / Rd).